The sequence spans 297 residues: Syntaxin-4 (297 aa).

Basic and acidic residues predominate over residues 1 to 12 (MRDRTHELRQGD). The tract at residues 1 to 21 (MRDRTHELRQGDDSSDDEDKE) is disordered. Residues 1–275 (MRDRTHELRQ…QKKARKKKVF (275 aa)) are Cytoplasmic-facing. Ser14 and Ser15 each carry phosphoserine. Phosphothreonine is present on Thr31. Residues Ser36, Ser117, Ser208, and Ser248 each carry the phosphoserine modification. A coiled-coil region spans residues 43–163 (QKVRTIRQTI…ERIRRQLKIT (121 aa)). Positions 200-262 (LNEISARHSE…ERGQEHVKVA (63 aa)) constitute a t-SNARE coiled-coil homology domain. A helical; Anchor for type IV membrane protein transmembrane segment spans residues 276-296 (IAICLSITVLILVVIIVISTL). A topological domain (extracellular) is located at residue Val297.

It belongs to the syntaxin family. As to quaternary structure, component of the SNARE complex composed of STX4, SNAP23 and VAMP7 that interacts with SYT7 during lysosomal exocytosis. Found in a complex with VAMP8 and SNAP23. Detected in a complex with SNAP23 and STXBP4. Interacts with VAMP2. Interacts with SNAP23 and SNAPIN. Interacts with LLGL1. Interacts (via C-terminus) with CENPF. Interacts with DOC2B. Interacts with STXBP6. Interacts with STXBP3; excludes interaction with DOC2B and SNAP25. Interacts with STXBP4; excludes interaction with VAMP2. Interacts with STXBP5L.

The protein resides in the cell membrane. Its subcellular location is the cell projection. It localises to the neuron projection. It is found in the stereocilium. In terms of biological role, plasma membrane t-SNARE that mediates docking of transport vesicles. Necessary for the translocation of SLC2A4 from intracellular vesicles to the plasma membrane. In neurons, recruited at neurite tips to membrane domains rich in the phospholipid 1-oleoyl-2-palmitoyl-PC (OPPC) which promotes neurite tip surface expression of the dopamine transporter SLC6A3/DAT by facilitating fusion of SLC6A3-containing transport vesicles with the plasma membrane. Together with STXB3 and VAMP2, may also play a role in docking/fusion of intracellular GLUT4-containing vesicles with the cell surface in adipocytes and in docking of synaptic vesicles at presynaptic active zones. Required for normal hearing. The polypeptide is Syntaxin-4 (STX4) (Bos taurus (Bovine)).